A 676-amino-acid polypeptide reads, in one-letter code: DNA ligase (676 aa).

Residues 35 to 39 (DAEYD), 84 to 85 (SL), and E118 contribute to the NAD(+) site. K120 functions as the N6-AMP-lysine intermediate in the catalytic mechanism. The NAD(+) site is built by R141, E176, K284, and K308. 4 residues coordinate Zn(2+): C402, C405, C420, and C426. Positions 595-676 (SYLSLIHGKI…WLQYTQSSEN (82 aa)) constitute a BRCT domain.

This sequence belongs to the NAD-dependent DNA ligase family. LigA subfamily. The cofactor is Mg(2+). Mn(2+) serves as cofactor.

It catalyses the reaction NAD(+) + (deoxyribonucleotide)n-3'-hydroxyl + 5'-phospho-(deoxyribonucleotide)m = (deoxyribonucleotide)n+m + AMP + beta-nicotinamide D-nucleotide.. Functionally, DNA ligase that catalyzes the formation of phosphodiester linkages between 5'-phosphoryl and 3'-hydroxyl groups in double-stranded DNA using NAD as a coenzyme and as the energy source for the reaction. It is essential for DNA replication and repair of damaged DNA. The sequence is that of DNA ligase from Ehrlichia chaffeensis (strain ATCC CRL-10679 / Arkansas).